A 1533-amino-acid polypeptide reads, in one-letter code: Glycogen debranching enzyme (1533 aa).

Ser64 carries the post-translational modification Phosphoserine. Active-site residues include Asp527, His530, and Asp628.

It belongs to the glycogen debranching enzyme family. Monomer. Interacts with NHLRC1/malin. Post-translationally, ubiquitinated. In terms of tissue distribution, ubiquitous. Expressed in striated skeletal muscle, heart, liver, spleen, skin, spinal cord, lung, kidney and testicle.

It is found in the cytoplasm. The catalysed reaction is Transfers a segment of a (1-&gt;4)-alpha-D-glucan to a new position in an acceptor, which may be glucose or a (1-&gt;4)-alpha-D-glucan.. It catalyses the reaction Hydrolysis of (1-&gt;6)-alpha-D-glucosidic branch linkages in glycogen phosphorylase limit dextrin.. Multifunctional enzyme acting as 1,4-alpha-D-glucan:1,4-alpha-D-glucan 4-alpha-D-glycosyltransferase and amylo-1,6-glucosidase in glycogen degradation. This chain is Glycogen debranching enzyme, found in Equus caballus (Horse).